We begin with the raw amino-acid sequence, 155 residues long: Ribonuclease H (155 aa).

In terms of domain architecture, RNase H type-1 spans Gln-4–Thr-145. 4 residues coordinate Mg(2+): Asp-13, Glu-51, Asp-73, and Asp-137.

The protein belongs to the RNase H family. Monomer. The cofactor is Mg(2+).

Its subcellular location is the cytoplasm. It carries out the reaction Endonucleolytic cleavage to 5'-phosphomonoester.. In terms of biological role, endonuclease that specifically degrades the RNA of RNA-DNA hybrids. The polypeptide is Ribonuclease H (Bartonella quintana (strain Toulouse) (Rochalimaea quintana)).